Consider the following 890-residue polypeptide: Phosphatidate phosphatase LPIN1 (890 aa).

The interval 1–108 is N-LIP; it reads MNYVGQLAGQ…IPMHLATSPI (108 aa). Residues Ser106 and Ser150 each carry the phosphoserine modification. Disordered regions lie at residues 125–183, 228–300, 365–392, and 421–456; these read VDRM…DMFP, SYPN…SSRK, KPPS…SRHL, and SGLA…STSD. A compositionally biased stretch (basic residues) spans 152 to 161; it reads VKKRRKRRRK. A Nuclear localization signal motif is present at residues 153–158; the sequence is KKRRKR. Basic and acidic residues-rich tracts occupy residues 162–172 and 252–265; these read SQLDSLKRDDN and SDSE…ERTG. Phosphoserine occurs at positions 252, 254, and 260. Residue Thr264 is modified to Phosphothreonine. Position 294 is a phosphoserine (Ser294). Lys425 carries the post-translational modification N6-acetyllysine. The span at 431–440 shows a compositional bias: polar residues; that stretch reads GARSANQSPQ. 3 positions are modified to phosphoserine: Ser434, Ser438, and Ser449. The segment covering 441-456 has biased composition (low complexity); sequence SVGSSGVDSGVESTSD. Residue Lys565 forms a Glycyl lysine isopeptide (Lys-Gly) (interchain with G-Cter in SUMO) linkage. The interval 566 to 616 is disordered; sequence EESKPEQCLAGKAHSTGEQPPQLSLATRVKHESSSSDEERAAAKPSNAGHL. Polar residues predominate over residues 581–590; that stretch reads TGEQPPQLSL. Positions 594-607 are enriched in basic and acidic residues; the sequence is VKHESSSSDEERAA. Residue Lys595 is modified to N6-acetyllysine. Lys595 is covalently cross-linked (Glycyl lysine isopeptide (Lys-Gly) (interchain with G-Cter in SUMO)). Ser600 and Ser601 each carry phosphoserine. The interval 624 to 830 is C-LIP; sequence YKKTLRLTSE…VNPKGELVQE (207 aa). Residues 678 to 682 carry the DXDXT motif motif; it reads DIDGT. Positions 689 to 693 match the LXXIL motif motif; the sequence is LGHIL. 2 positions are modified to phosphoserine: Ser887 and Ser889.

The protein belongs to the lipin family. As to quaternary structure, interacts (via LXXIL motif) with PPARA. Interacts with PPARGC1A. Interaction with PPARA and PPARGC1A leads to the formation of a complex that modulates gene transcription. Interacts with MEF2C. The cofactor is Mg(2+). Mn(2+) serves as cofactor. Post-translationally, phosphorylated at multiple sites by mTOR in response to insulin, leading to its inactivation. Phosphorylation does not affect the catalytic activity but regulates the localization. Phosphorylation is decreased by epinephrine. Dephosphorylated by the CTDNEP1-CNEP1R1 complex. Dephosphorylation following mTOR inhibition promotes its activity. In terms of processing, acetylation at Lys-425 and Lys-595 by KAT5 in response to fatty acids promotes translocation to the endoplasmic reticulum and synthesis of diacylglycerol. Sumoylated. Specifically expressed in skeletal muscle. Also abundant in adipose tissue. Lower levels in some portions of the digestive tract.

The protein localises to the cytoplasm. The protein resides in the cytosol. It is found in the endoplasmic reticulum membrane. Its subcellular location is the nucleus membrane. The catalysed reaction is a 1,2-diacyl-sn-glycero-3-phosphate + H2O = a 1,2-diacyl-sn-glycerol + phosphate. It carries out the reaction 1-octadecanoyl-2-(4Z,7Z,10Z,13Z,16Z,19Z-docosahexaenoyl)-sn-glycero-3-phosphate + H2O = 1-octadecanoyl-2-(4Z,7Z,10Z,13Z,16Z,19Z-docosahexaenoyl)-sn-glycerol + phosphate. The enzyme catalyses 1-octadecanoyl-2-(5Z,8Z,11Z,14Z-eicosatetraenoyl)-sn-glycero-3-phosphate + H2O = 1-octadecanoyl-2-(5Z,8Z,11Z,14Z-eicosatetraenoyl)-sn-glycerol + phosphate. It catalyses the reaction 1-octadecanoyl-2-(9Z,12Z-octadecadienoyl)-sn-glycero-3-phosphate + H2O = 1-octadecanoyl-2-(9Z,12Z)-octadecadienoyl-sn-glycerol + phosphate. The catalysed reaction is 1-octadecanoyl-2-(9Z-octadecenoyl)-sn-glycero-3-phosphate + H2O = 1-octadecanoyl-2-(9Z-octadecenoyl)-sn-glycerol + phosphate. It carries out the reaction 1-hexadecanoyl-2-(4Z,7Z,10Z,13Z,16Z,19Z-docosahexaenoyl)-sn-glycero-3-phosphate + H2O = 1-hexadecanoyl-2-(4Z,7Z,10Z,13Z,16Z,19Z-docosahexaenoyl)-sn-glycerol + phosphate. The enzyme catalyses 1,2-dioctadecanoyl-sn-glycero-3-phosphate + H2O = 1,2-dioctadecanoyl-sn-glycerol + phosphate. It catalyses the reaction 1-hexadecanoyl-2-(5Z,8Z,11Z,14Z-eicosatetraenoyl)-sn-glycero-3-phosphate + H2O = 1-hexadecanoyl-2-(5Z,8Z,11Z,14Z-eicosatetraenoyl)-sn-glycerol + phosphate. The catalysed reaction is 1-hexadecanoyl-2-(9Z,12Z-octadecadienoyl)-sn-glycero-3-phosphate + H2O = 1-hexadecanoyl-2-(9Z,12Z-octadecadienoyl)-sn-glycerol + phosphate. It carries out the reaction 1-hexadecanoyl-2-(9Z-octadecenoyl)-sn-glycero-3-phosphate + H2O = 1-hexadecanoyl-2-(9Z-octadecenoyl)-sn-glycerol + phosphate. The enzyme catalyses 1,2-di-(4Z,7Z,10Z,13Z,16Z,19Z-docosahexaenoyl)-sn-glycero-3-phosphate + H2O = 1,2-di-(4Z,7Z,10Z,13Z,16Z,19Z-docosahexaenoyl)-sn-glycerol + phosphate. It catalyses the reaction 1,2-di-(5Z,8Z,11Z,14Z)-eicosatetraenoyl-sn-glycero-3-phosphate + H2O = 1,2-di-(5Z,8Z,11Z,14Z)-eicosatetraenoyl-sn-glycerol + phosphate. The catalysed reaction is 1,2-di-(9Z,12Z-octadecadienoyl)-sn-glycero-3-phosphate + H2O = 1,2-di-(9Z,12Z-octadecadienoyl)-sn-glycerol + phosphate. It carries out the reaction 1,2-di-(9Z-octadecenoyl)-sn-glycero-3-phosphate + H2O = 1,2-di-(9Z-octadecenoyl)-sn-glycerol + phosphate. The enzyme catalyses 1,2-dihexadecanoyl-sn-glycero-3-phosphate + H2O = 1,2-dihexadecanoyl-sn-glycerol + phosphate. Potently inhibited by sphingolipids, in particular, the sphingoid bases sphinganine and sphingosine and ceramide-1-phosphate. Inhibited by concentrations of Mg(2+) and Mn(2+) above their optimums and by Ca(2+), Zn(2+), N-ethylmaleimide and propranolol. Its activity is regulated as follows. Sertraline and propanolol inhibit activity in dose-dependent manners with IC(50) values of 103 uM and 226 uM, respectively. With respect to regulation, sertraline and propanolol inhibit activity in dose-dependent manners with IC(50) values of 108 uM and 271 uM, respectively. Sertraline and propanolol inhibit activity in dose-dependent manners with IC(50) values of 143 uM and 227 uM, respectively. In terms of biological role, acts as a magnesium-dependent phosphatidate phosphatase enzyme which catalyzes the conversion of phosphatidic acid to diacylglycerol during triglyceride, phosphatidylcholine and phosphatidylethanolamine biosynthesis and therefore controls the metabolism of fatty acids at different levels. Is involved in adipocyte differentiation. Recruited at the mitochondrion outer membrane and is involved in mitochondrial fission by converting phosphatidic acid to diacylglycerol. Acts also as nuclear transcriptional coactivator for PPARGC1A/PPARA regulatory pathway to modulate lipid metabolism gene expression. This chain is Phosphatidate phosphatase LPIN1, found in Homo sapiens (Human).